Reading from the N-terminus, the 24-residue chain is Protein YriA (24 aa).

This Escherichia coli (strain K12) protein is Protein YriA.